A 400-amino-acid chain; its full sequence is Argininosuccinate synthase (400 aa).

Residues 10–18 (AYSGGVDTS) and alanine 38 contribute to the ATP site. Tyrosine 89 provides a ligand contact to L-citrulline. Glycine 119 lines the ATP pocket. 3 residues coordinate L-aspartate: threonine 121, asparagine 125, and aspartate 126. Asparagine 125 contributes to the L-citrulline binding site. Residues arginine 129, serine 177, serine 186, glutamate 262, and tyrosine 274 each coordinate L-citrulline.

This sequence belongs to the argininosuccinate synthase family. Type 1 subfamily. In terms of assembly, homotetramer.

It localises to the cytoplasm. It carries out the reaction L-citrulline + L-aspartate + ATP = 2-(N(omega)-L-arginino)succinate + AMP + diphosphate + H(+). The protein operates within amino-acid biosynthesis; L-arginine biosynthesis; L-arginine from L-ornithine and carbamoyl phosphate: step 2/3. This is Argininosuccinate synthase from Prochlorococcus marinus (strain NATL1A).